A 597-amino-acid chain; its full sequence is Arginine--tRNA ligase (597 aa).

Residues 138 to 148 (ANPTGPMHVGH) carry the 'HIGH' region motif.

The protein belongs to the class-I aminoacyl-tRNA synthetase family. In terms of assembly, monomer.

It is found in the cytoplasm. The catalysed reaction is tRNA(Arg) + L-arginine + ATP = L-arginyl-tRNA(Arg) + AMP + diphosphate. The polypeptide is Arginine--tRNA ligase (Nitrobacter hamburgensis (strain DSM 10229 / NCIMB 13809 / X14)).